The sequence spans 131 residues: QRFP-like peptide (131 aa).

An N-terminal signal peptide occupies residues M1–A25. Residues Y26 to R94 constitute a propeptide that is removed on maturation. The interval R48–D131 is disordered. The span at M97–K106 shows a compositional bias: polar residues. A Phenylalanine amide modification is found at F119. A compositionally biased stretch (basic and acidic residues) spans G120–D131. Positions E123–D131 are excised as a propeptide.

Belongs to the RFamide neuropeptide family.

The protein resides in the secreted. Its function is as follows. Ligand for the G-protein coupled receptor QRFPR. This is QRFP-like peptide from Branchiostoma floridae (Florida lancelet).